The sequence spans 202 residues: Type II restriction enzyme MthZI (202 aa).

The enzyme catalyses Endonucleolytic cleavage of DNA to give specific double-stranded fragments with terminal 5'-phosphates.. Functionally, a P subtype restriction enzyme that recognizes the double-stranded sequence 5'-CTAG-3' and cleaves after C-1. The chain is Type II restriction enzyme MthZI from Methanothermobacter thermautotrophicus (Methanobacterium thermoformicicum).